The sequence spans 217 residues: Putative N-acetylmuramoyl-L-alanine amidase (217 aa).

In terms of domain architecture, MurNAc-LAA spans 3 to 206; sequence IAIDAGHGGQ…ISKSISIALK (204 aa).

It belongs to the N-acetylmuramoyl-L-alanine amidase 3 family.

Its subcellular location is the secreted. It catalyses the reaction Hydrolyzes the link between N-acetylmuramoyl residues and L-amino acid residues in certain cell-wall glycopeptides.. Functionally, cell-wall hydrolase involved in septum cleavage during cell division. In Buchnera aphidicola subsp. Baizongia pistaciae (strain Bp), this protein is Putative N-acetylmuramoyl-L-alanine amidase (amiB).